The sequence spans 75 residues: Probable pilin MJ1469 (75 aa).

Residues 1 to 11 constitute a propeptide that is removed on maturation; the sequence is MKPKKIISNKA. A QXSXEXXXL motif is present at residues 12–20; it reads QISLELALL.

Post-translationally, the N-terminus is cleaved by the prepilin peptidase EppA, which recognizes the class III signal sequence.

The protein resides in the secreted. The protein localises to the cell surface. It is found in the fimbrium. This chain is Probable pilin MJ1469, found in Methanocaldococcus jannaschii (strain ATCC 43067 / DSM 2661 / JAL-1 / JCM 10045 / NBRC 100440) (Methanococcus jannaschii).